A 473-amino-acid chain; its full sequence is Glutamate--tRNA ligase (473 aa).

The 'HIGH' region signature appears at 11–21 (PSPTGFLHIGG). The 'KMSKS' region signature appears at 240-244 (KLSKR). Lys243 contributes to the ATP binding site.

This sequence belongs to the class-I aminoacyl-tRNA synthetase family. Glutamate--tRNA ligase type 1 subfamily. As to quaternary structure, monomer.

It is found in the cytoplasm. The catalysed reaction is tRNA(Glu) + L-glutamate + ATP = L-glutamyl-tRNA(Glu) + AMP + diphosphate. Its function is as follows. Catalyzes the attachment of glutamate to tRNA(Glu) in a two-step reaction: glutamate is first activated by ATP to form Glu-AMP and then transferred to the acceptor end of tRNA(Glu). In Rhodopseudomonas palustris (strain HaA2), this protein is Glutamate--tRNA ligase.